The chain runs to 396 residues: Argininosuccinate synthase (396 aa).

An ATP-binding site is contributed by 6 to 14 (AYSGGLDTS). Residue Tyr-83 coordinates L-citrulline. Gly-113 is a binding site for ATP. The L-aspartate site is built by Thr-115, Asn-119, and Asp-120. L-citrulline is bound at residue Asn-119. L-citrulline contacts are provided by Arg-123, Ser-171, Ser-180, Glu-256, and Tyr-268.

This sequence belongs to the argininosuccinate synthase family. Type 1 subfamily. Homotetramer.

It is found in the cytoplasm. The enzyme catalyses L-citrulline + L-aspartate + ATP = 2-(N(omega)-L-arginino)succinate + AMP + diphosphate + H(+). It functions in the pathway amino-acid biosynthesis; L-arginine biosynthesis; L-arginine from L-ornithine and carbamoyl phosphate: step 2/3. This is Argininosuccinate synthase from Hyperthermus butylicus (strain DSM 5456 / JCM 9403 / PLM1-5).